The primary structure comprises 136 residues: Small ribosomal subunit protein uS8c (136 aa).

Belongs to the universal ribosomal protein uS8 family. In terms of assembly, part of the 30S ribosomal subunit.

The protein resides in the plastid. It localises to the chloroplast. Its function is as follows. One of the primary rRNA binding proteins, it binds directly to 16S rRNA central domain where it helps coordinate assembly of the platform of the 30S subunit. This chain is Small ribosomal subunit protein uS8c (rps8), found in Agrostis stolonifera (Creeping bentgrass).